The sequence spans 448 residues: Phosphoglucosamine mutase (448 aa).

The active-site Phosphoserine intermediate is Ser-89. 4 residues coordinate Mg(2+): Ser-89, Asp-232, Asp-234, and Asp-236. Ser-89 carries the phosphoserine modification.

It belongs to the phosphohexose mutase family. As to quaternary structure, forms large aggregates. It depends on Mg(2+) as a cofactor. Activated by phosphorylation.

The enzyme catalyses alpha-D-glucosamine 1-phosphate = D-glucosamine 6-phosphate. Functionally, catalyzes the conversion of glucosamine-6-phosphate to glucosamine-1-phosphate. In Methanocaldococcus jannaschii (strain ATCC 43067 / DSM 2661 / JAL-1 / JCM 10045 / NBRC 100440) (Methanococcus jannaschii), this protein is Phosphoglucosamine mutase (glmM).